The chain runs to 41 residues: Bacteriocin (41 aa).

An intrachain disulfide couples Cys-9 to Cys-14.

The protein resides in the secreted. In terms of biological role, bacteriocin active against S.aureus, S.typhi, B.thuringiensis, Klebsiella sp., E.coli KL16 and E.coli Gj137. This is Bacteriocin from Lactococcus sp.